Reading from the N-terminus, the 437-residue chain is Perilipin-2 (437 aa).

Alanine 2 is subject to N-acetylalanine. Serine 215 bears the Phosphoserine mark. Position 232 is a phosphotyrosine (tyrosine 232). The interval 412–437 (SQNAQDQGAEMDKSSQETQRSEHKTH) is disordered. A compositionally biased stretch (basic and acidic residues) spans 421 to 437 (EMDKSSQETQRSEHKTH).

This sequence belongs to the perilipin family. Interacts with IRGC. Acylated; primarily with C14, C16 and C18 fatty acids. Post-translationally, phosphorylation at Tyr-232 by isoform 1 of CHKA (CHKalpha2) promotes dissociation from lipid droplets: dissociation is followed by recruitment of autophagosome machinery to lipid droplets and subsequent lipid droplet lipolysis. In terms of processing, polyubiquitination of Nt-acetylatable A-PLIN2 by MARCHF6 lead to degradation by 26S proteasomes. Milk lipid globules.

The protein localises to the membrane. It localises to the lipid droplet. Functionally, structural component of lipid droplets, which is required for the formation and maintenance of lipid storage droplets. The protein is Perilipin-2 of Homo sapiens (Human).